Here is a 334-residue protein sequence, read N- to C-terminus: Phosphoribosylformylglycinamidine cyclo-ligase (334 aa).

The protein belongs to the AIR synthase family.

Its subcellular location is the cytoplasm. It carries out the reaction 2-formamido-N(1)-(5-O-phospho-beta-D-ribosyl)acetamidine + ATP = 5-amino-1-(5-phospho-beta-D-ribosyl)imidazole + ADP + phosphate + H(+). It participates in purine metabolism; IMP biosynthesis via de novo pathway; 5-amino-1-(5-phospho-D-ribosyl)imidazole from N(2)-formyl-N(1)-(5-phospho-D-ribosyl)glycinamide: step 2/2. In Pyrococcus horikoshii (strain ATCC 700860 / DSM 12428 / JCM 9974 / NBRC 100139 / OT-3), this protein is Phosphoribosylformylglycinamidine cyclo-ligase.